We begin with the raw amino-acid sequence, 215 residues long: Ras-related protein Rab-5A (215 aa).

Residues Ser29, Ala30, Gly32, Lys33, Ser34, Ser35, His46, Glu47, Thr52, and Gly78 each contribute to the GTP site. Ser34 serves as a coordination point for Mg(2+). 2 short sequence motifs (switch) span residues Gln44–Ala56 and Ala77–Ala93. Mg(2+) is bound at residue Thr52. At Ser84 the chain carries Phosphoserine. Residues Asn133, Lys134, Asp136, Ala164, and Lys165 each coordinate GTP. Residues Leu181–Asn215 are disordered. Residues Cys212 and Cys213 are each lipidated (S-geranylgeranyl cysteine).

It belongs to the small GTPase superfamily. Rab family. Interacts with GDI1; this promotes dissociation from membranes; phosphorylation at Ser-84 disrupts this interaction. Interacts with GDI2; phosphorylation at Ser-84 disrupts the interaction. Interacts with EEA1. Interacts with RIN1 and GAPVD1, which regulate its pathway, probably by acting as a GEF. Interacts with RINL. Interacts with ALS2CL, SUN2, ZFYVE20 and RUFY1. Interacts with RABEP1; one RABEP1 homodimer binds two RAB5A chains, but at opposite sides of the dimer. Interacts with SGSM1 and SGSM3. Interacts with PIK3CB. Interacts with OCRL and INPP5F. May be a component of a complex composed of RAB5A, DYN2 and PIK3C3. Does not interact with BLOC-3 complex (heterodimer of HPS1 and HPS4). Interacts with CLN5. Interacts with APPL2. Interacts with F8A1/F8A2/F8A3. Found in a complex with F8A1/F8A2/F8A3, HTT and RAB5A; mediates the recruitment of HTT by RAB5A onto early endosomes. Interacts with ATP9A. Interacts with PPP1R21; mediates the recruitment of FERRY complex by RAB5A onto early endosomes. Mg(2+) is required as a cofactor. In terms of processing, phosphorylation of Ser-84 in the switch II region by LRRK2 prevents the association of RAB regulatory proteins, including RAB GDP dissociation inhibitors GDI1 and GDI2.

Its subcellular location is the cell membrane. The protein resides in the early endosome membrane. The protein localises to the melanosome. It is found in the cytoplasmic vesicle. It localises to the cell projection. Its subcellular location is the ruffle. The protein resides in the membrane. The protein localises to the cytoplasm. It is found in the cytosol. It localises to the phagosome membrane. Its subcellular location is the endosome membrane. It carries out the reaction GTP + H2O = GDP + phosphate + H(+). Regulated by guanine nucleotide exchange factors (GEFs) including RINL, which promote the exchange of bound GDP for free GTP. Regulated by GTPase activating proteins (GAPs) which increase the GTP hydrolysis activity. Inhibited by GDP dissociation inhibitors (GDIs). In terms of biological role, the small GTPases Rab are key regulators of intracellular membrane trafficking, from the formation of transport vesicles to their fusion with membranes. Rabs cycle between an inactive GDP-bound form and an active GTP-bound form that is able to recruit to membranes different sets of downstream effectors directly responsible for vesicle formation, movement, tethering and fusion. RAB5A is required for the fusion of plasma membranes and early endosomes. Contributes to the regulation of filopodia extension. Required for the exosomal release of SDCBP, CD63, PDCD6IP and syndecan. Regulates maturation of apoptotic cell-containing phagosomes, probably downstream of DYN2 and PIK3C3. This chain is Ras-related protein Rab-5A, found in Mus musculus (Mouse).